Here is a 291-residue protein sequence, read N- to C-terminus: Urease accessory protein UreD (291 aa).

The protein belongs to the UreD family. In terms of assembly, ureD, UreF and UreG form a complex that acts as a GTP-hydrolysis-dependent molecular chaperone, activating the urease apoprotein by helping to assemble the nickel containing metallocenter of UreC. The UreE protein probably delivers the nickel.

It localises to the cytoplasm. In terms of biological role, required for maturation of urease via the functional incorporation of the urease nickel metallocenter. In Acinetobacter baumannii (strain ATCC 17978 / DSM 105126 / CIP 53.77 / LMG 1025 / NCDC KC755 / 5377), this protein is Urease accessory protein UreD.